The primary structure comprises 291 residues: Bifunctional protein FolD (291 aa).

NADP(+) contacts are provided by residues 171-173 and isoleucine 239; that span reads GVS.

Belongs to the tetrahydrofolate dehydrogenase/cyclohydrolase family. In terms of assembly, homodimer.

The enzyme catalyses (6R)-5,10-methylene-5,6,7,8-tetrahydrofolate + NADP(+) = (6R)-5,10-methenyltetrahydrofolate + NADPH. It carries out the reaction (6R)-5,10-methenyltetrahydrofolate + H2O = (6R)-10-formyltetrahydrofolate + H(+). It participates in one-carbon metabolism; tetrahydrofolate interconversion. Catalyzes the oxidation of 5,10-methylenetetrahydrofolate to 5,10-methenyltetrahydrofolate and then the hydrolysis of 5,10-methenyltetrahydrofolate to 10-formyltetrahydrofolate. This chain is Bifunctional protein FolD, found in Xylella fastidiosa (strain Temecula1 / ATCC 700964).